A 276-amino-acid chain; its full sequence is Cell wall synthesis protein KRE9 (276 aa).

Positions 1 to 21 (MRLQRNSIICALVFLVSFVLG) are cleaved as a signal peptide.

Belongs to the KRE9/KNH1 family. O-glycosylated.

The protein resides in the secreted. The protein localises to the cell wall. In terms of biological role, involved in cell wall beta(1-&gt;6) glucan synthesis. The polypeptide is Cell wall synthesis protein KRE9 (Saccharomyces cerevisiae (strain ATCC 204508 / S288c) (Baker's yeast)).